A 473-amino-acid chain; its full sequence is Photosystem II CP43 reaction center protein (473 aa).

Positions 1–14 are excised as a propeptide; that stretch reads MKTLYSLRRFYHVE. Thr15 is subject to N-acetylthreonine. Thr15 carries the phosphothreonine modification. The next 5 helical transmembrane spans lie at 69-93, 134-155, 178-200, 255-275, and 291-312; these read LFEV…PHLA, LLGP…KDRN, KALY…RKIT, KPFA…LSYS, and WFNN…ASQA. Glu367 contributes to the [CaMn4O5] cluster binding site. Residues 447 to 471 traverse the membrane as a helical segment; the sequence is RARAAAAGFEKGIDRDFEPVLSMTP.

It belongs to the PsbB/PsbC family. PsbC subfamily. As to quaternary structure, PSII is composed of 1 copy each of membrane proteins PsbA, PsbB, PsbC, PsbD, PsbE, PsbF, PsbH, PsbI, PsbJ, PsbK, PsbL, PsbM, PsbT, PsbX, PsbY, PsbZ, Psb30/Ycf12, at least 3 peripheral proteins of the oxygen-evolving complex and a large number of cofactors. It forms dimeric complexes. Binds multiple chlorophylls and provides some of the ligands for the Ca-4Mn-5O cluster of the oxygen-evolving complex. It may also provide a ligand for a Cl- that is required for oxygen evolution. PSII binds additional chlorophylls, carotenoids and specific lipids. serves as cofactor.

The protein localises to the plastid. It localises to the chloroplast thylakoid membrane. Functionally, one of the components of the core complex of photosystem II (PSII). It binds chlorophyll and helps catalyze the primary light-induced photochemical processes of PSII. PSII is a light-driven water:plastoquinone oxidoreductase, using light energy to abstract electrons from H(2)O, generating O(2) and a proton gradient subsequently used for ATP formation. This chain is Photosystem II CP43 reaction center protein, found in Draba nemorosa (Woodland whitlowgrass).